The primary structure comprises 101 residues: MIRYSSRNRSAREVPVRRHPIFQVQHWKTSNEHSYHYSLCITFRSNPRTLTFSKITVKNDGRNFSQKFFFSFLLKSFLRWINCSLPFEIWRRSKSISTHLR.

This is an uncharacterized protein from Saccharomyces cerevisiae (strain ATCC 204508 / S288c) (Baker's yeast).